Reading from the N-terminus, the 210-residue chain is Glycerol-3-phosphate acyltransferase 2 (210 aa).

The next 6 helical transmembrane spans lie at 4–24 (LIMV…PAPY), 52–72 (VGFW…ALAM), 73–93 (AVAN…LMAI), 114–134 (IGIL…CFLI), 141–161 (FPTL…WLGQ), and 163–183 (DMGK…MYIP).

Belongs to the PlsY family. As to quaternary structure, probably interacts with PlsX.

It localises to the cell membrane. The catalysed reaction is an acyl phosphate + sn-glycerol 3-phosphate = a 1-acyl-sn-glycero-3-phosphate + phosphate. The protein operates within lipid metabolism; phospholipid metabolism. In terms of biological role, catalyzes the transfer of an acyl group from acyl-phosphate (acyl-PO(4)) to glycerol-3-phosphate (G3P) to form lysophosphatidic acid (LPA). This enzyme utilizes acyl-phosphate as fatty acyl donor, but not acyl-CoA or acyl-ACP. In Dehalococcoides mccartyi (strain CBDB1), this protein is Glycerol-3-phosphate acyltransferase 2.